The following is a 452-amino-acid chain: Mitochondrial distribution and morphology protein 10 (452 aa).

Positions 105–130 (PLAPESWDSDGPGHEGSDGQEDETTP) are disordered.

The protein belongs to the MDM10 family. In terms of assembly, component of the ER-mitochondria encounter structure (ERMES) or MDM complex, composed of MMM1, MDM10, MDM12 and MDM34. Associates with the mitochondrial outer membrane sorting assembly machinery SAM(core) complex.

Its subcellular location is the mitochondrion outer membrane. Its function is as follows. Component of the ERMES/MDM complex, which serves as a molecular tether to connect the endoplasmic reticulum and mitochondria. Components of this complex are involved in the control of mitochondrial shape and protein biogenesis and may function in phospholipid exchange. MDM10 is involved in the late assembly steps of the general translocase of the mitochondrial outer membrane (TOM complex). Functions in the TOM40-specific route of the assembly of outer membrane beta-barrel proteins, including the association of TOM40 with the receptor TOM22 and small TOM proteins. Can associate with the SAM(core) complex as well as the MDM12-MMM1 complex, both involved in late steps of the major beta-barrel assembly pathway, that is responsible for biogenesis of all outer membrane beta-barrel proteins. May act as a switch that shuttles between both complexes and channels precursor proteins into the TOM40-specific pathway. Plays a role in mitochondrial morphology and in the inheritance of mitochondria. In Uncinocarpus reesii (strain UAMH 1704), this protein is Mitochondrial distribution and morphology protein 10.